Here is a 336-residue protein sequence, read N- to C-terminus: Ketol-acid reductoisomerase (NADP(+)) (336 aa).

The region spanning 1 to 182 is the KARI N-terminal Rossmann domain; sequence MAVIYYDKDA…GVTRAGVIET (182 aa). NADP(+)-binding positions include 25–28, Arg-48, Ser-51, Ser-53, and 83–86; these read YGSQ and DEHQ. His-108 is a catalytic residue. Gly-134 lines the NADP(+) pocket. The KARI C-terminal knotted domain maps to 183 to 328; it reads TFKEETETDL…KELRKMMPWL (146 aa). Residues Asp-191, Glu-195, Glu-227, and Glu-231 each coordinate Mg(2+). Ser-252 contacts substrate.

Belongs to the ketol-acid reductoisomerase family. The cofactor is Mg(2+).

It catalyses the reaction (2R)-2,3-dihydroxy-3-methylbutanoate + NADP(+) = (2S)-2-acetolactate + NADPH + H(+). The enzyme catalyses (2R,3R)-2,3-dihydroxy-3-methylpentanoate + NADP(+) = (S)-2-ethyl-2-hydroxy-3-oxobutanoate + NADPH + H(+). It functions in the pathway amino-acid biosynthesis; L-isoleucine biosynthesis; L-isoleucine from 2-oxobutanoate: step 2/4. The protein operates within amino-acid biosynthesis; L-valine biosynthesis; L-valine from pyruvate: step 2/4. In terms of biological role, involved in the biosynthesis of branched-chain amino acids (BCAA). Catalyzes an alkyl-migration followed by a ketol-acid reduction of (S)-2-acetolactate (S2AL) to yield (R)-2,3-dihydroxy-isovalerate. In the isomerase reaction, S2AL is rearranged via a Mg-dependent methyl migration to produce 3-hydroxy-3-methyl-2-ketobutyrate (HMKB). In the reductase reaction, this 2-ketoacid undergoes a metal-dependent reduction by NADPH to yield (R)-2,3-dihydroxy-isovalerate. In Thermotoga maritima (strain ATCC 43589 / DSM 3109 / JCM 10099 / NBRC 100826 / MSB8), this protein is Ketol-acid reductoisomerase (NADP(+)).